The sequence spans 121 residues: Probable V-type proton ATPase subunit F (121 aa).

This sequence belongs to the V-ATPase F subunit family. In terms of assembly, V-ATPase is a heteromultimeric enzyme made up of two complexes: the ATP-hydrolytic V1 complex and the proton translocation V0 complex. The V1 complex consists of three catalytic AB heterodimers that form a heterohexamer, three peripheral stalks each consisting of EG heterodimers, one central rotor including subunits D and F, and the regulatory subunits C and H. The proton translocation complex V0 consists of the proton transport subunit a, a ring of proteolipid subunits c9c'', rotary subunit d, subunits e and f, and the accessory subunits vah-19/Ac45 and vah-20/PRR.

Subunit of the V1 complex of vacuolar(H+)-ATPase (V-ATPase), a multisubunit enzyme composed of a peripheral complex (V1) that hydrolyzes ATP and a membrane integral complex (V0) that translocates protons. V-ATPase is responsible for acidifying and maintaining the pH of intracellular compartments and in some cell types, is targeted to the plasma membrane, where it is responsible for acidifying the extracellular environment. Required along with other vacuolar ATPase components for the removal of protein aggregates which form in immature oocytes in the distal gonad. This removal occurs as the oocytes mature and move to the proximal gonad, is triggered by the introduction of sperm through mating and occurs before fertilization. The introduction of sperm triggers V-ATPase accumulation in proximal oocytes and induces lysosomal acidification which leads to engulfing of protein aggregates by lysosomes and subsequent clearance of the aggregates. Lysosomal acidification also leads to changes in mitochondrial morphology and function. Mitochondria in distal immature oocytes are fragmented, produce high levels of reactive oxygen species (ROS) and have high membrane potential, indicative of metabolic inactivity. In contrast, mitochondria in proximal mature oocytes are tubular with lower ROS levels and membrane potential, indicative of an active metabolic state required for aggregate mobilization before clearance. This Caenorhabditis elegans protein is Probable V-type proton ATPase subunit F.